The sequence spans 383 residues: Ribosomal RNA large subunit methyltransferase G (383 aa).

It belongs to the methyltransferase superfamily. RlmG family.

Its subcellular location is the cytoplasm. It carries out the reaction guanosine(1835) in 23S rRNA + S-adenosyl-L-methionine = N(2)-methylguanosine(1835) in 23S rRNA + S-adenosyl-L-homocysteine + H(+). Its function is as follows. Specifically methylates the guanine in position 1835 (m2G1835) of 23S rRNA. This is Ribosomal RNA large subunit methyltransferase G from Shewanella denitrificans (strain OS217 / ATCC BAA-1090 / DSM 15013).